The following is a 223-amino-acid chain: Deoxyribose-phosphate aldolase (223 aa).

Residue aspartate 89 is the Proton donor/acceptor of the active site. Catalysis depends on lysine 152, which acts as the Schiff-base intermediate with acetaldehyde. Residue lysine 181 is the Proton donor/acceptor of the active site.

It belongs to the DeoC/FbaB aldolase family. DeoC type 1 subfamily.

It is found in the cytoplasm. The enzyme catalyses 2-deoxy-D-ribose 5-phosphate = D-glyceraldehyde 3-phosphate + acetaldehyde. Its pathway is carbohydrate degradation; 2-deoxy-D-ribose 1-phosphate degradation; D-glyceraldehyde 3-phosphate and acetaldehyde from 2-deoxy-alpha-D-ribose 1-phosphate: step 2/2. Catalyzes a reversible aldol reaction between acetaldehyde and D-glyceraldehyde 3-phosphate to generate 2-deoxy-D-ribose 5-phosphate. The protein is Deoxyribose-phosphate aldolase of Bacillus cereus (strain Q1).